Reading from the N-terminus, the 361-residue chain is Feruloyl CoA ortho-hydroxylase 1 (361 aa).

One can recognise a Fe2OG dioxygenase domain in the interval 204–312 (TKESLFMGSI…RISVPIFVNP (109 aa)). Tyrosine 220 provides a ligand contact to 2-oxoglutarate. Residues histidine 235, aspartate 237, and histidine 293 each coordinate Fe cation. 2-oxoglutarate-binding residues include arginine 303 and serine 305.

Belongs to the iron/ascorbate-dependent oxidoreductase family. It depends on L-ascorbate as a cofactor. Fe(2+) is required as a cofactor. In terms of tissue distribution, highly expressed in roots, especially in the cortex.

The enzyme catalyses (E)-feruloyl-CoA + 2-oxoglutarate + O2 = (E)-6-hydroxyferuloyl-CoA + succinate + CO2. It carries out the reaction (E)-6-hydroxyferuloyl-CoA = scopoletin + CoA. Its pathway is phenylpropanoid metabolism. Functionally, 2-oxoglutarate (OG)- and Fe(II)-dependent dioxygenase (2OGD) involved in scopoletin biosynthesis. Converts feruloyl CoA into 6'-hydroxyferuloyl CoA but has no activity with ferulic acid, feruloylquinic acid, caffeic acid, caffeoyl CoA, p-coumaric acid, cinnamic acid, cinnamoyl CoA or benzoyl CoA. Required for the production and secretion of compounds (e.g. fluorescent coumarins) that facilitate the mobilization and uptake of iron from sources with low bioavailability or in high pH-induced iron deficiency conditions. Involved in the pathway of sideretin biosynthesis from feruloyl CoA, a redox-active catecholic metabolite exuded by roots in response to iron deficiency in order to facilitate the uptake of iron; this pathway consists in the successive conversion from feruloyl CoA to scopoletin, from scopoletin to fraxetin and from fraxetin to sideretin. Catalyzes the biosynthesis of scopoletin from feruloyl CoA. In Arabidopsis thaliana (Mouse-ear cress), this protein is Feruloyl CoA ortho-hydroxylase 1.